We begin with the raw amino-acid sequence, 5209 residues long: E3 ubiquitin-protein ligase rnf213-alpha (5209 aa).

Polar residues-rich tracts occupy residues 27–52 (SQSY…QITN) and 61–72 (ESKSLEIQNANV). The segment at 27-373 (SQSYETTQGT…KRNTRSTQHI (347 aa)) is disordered. Over residues 85 to 101 (PKKKKRKKRKKEKKKKS) the composition is skewed to basic residues. Over residues 108–118 (SSLTSDLSDIS) the composition is skewed to low complexity. The segment covering 119–128 (LTDKEKKMDT) has biased composition (basic and acidic residues). Polar residues-rich tracts occupy residues 167–177 (LSASALTTGSS) and 184–195 (IGTTQKPVSASA). Residues 205–218 (QTKEEKVKCKDEGQ) show a composition bias toward basic and acidic residues. Polar residues predominate over residues 219–243 (KSLSAKAQHTPNANVDQNANVQSDA). A compositionally biased stretch (low complexity) spans 256 to 269 (KSSSVKTKPSKSTV). 2 stretches are compositionally biased toward basic and acidic residues: residues 271-288 (DPKK…RDNE) and 330-352 (MKVE…SKES). Residues 2036-2041 (GVGKSL), Glu-2135, Asp-2193, Arg-2252, Lys-2535, and Ser-2610 each bind ATP. Zn(2+) contacts are provided by Cys-4005, Cys-4008, Cys-4020, His-4022, Cys-4025, Cys-4028, Cys-4040, Cys-4043, Cys-4507, and His-4511. The RING-type zinc-finger motif lies at 4005-4043 (CPVCMGDPRDPLSLPCDHIYCLTCIRQWLVPGQMHCPLC). The segment at 4487 to 4557 (MPDDMLAVAQ…MQIQADRTQS (71 aa)) adopts an RZ-type zinc-finger fold. The active-site Nucleophile; for E3 ubiquitin-lipopolysaccharide ligase activity is Cys-4518. Zn(2+)-binding residues include Cys-4527 and Cys-4530.

Belongs to the AAA ATPase family.

Its subcellular location is the cytoplasm. The protein localises to the cytosol. It localises to the lipid droplet. It catalyses the reaction S-ubiquitinyl-[E2 ubiquitin-conjugating enzyme]-L-cysteine + [acceptor protein]-L-lysine = [E2 ubiquitin-conjugating enzyme]-L-cysteine + N(6)-ubiquitinyl-[acceptor protein]-L-lysine.. The catalysed reaction is ATP + H2O = ADP + phosphate + H(+). It participates in protein modification; protein ubiquitination. Its function is as follows. Atypical E3 ubiquitin ligase that can catalyze ubiquitination of both proteins and lipids, and which is involved in various processes, such as lipid metabolism, angiogenesis and cell-autonomous immunity. Acts as a key immune sensor by catalyzing ubiquitination of the lipid A moiety of bacterial lipopolysaccharide (LPS) via its RZ-type zinc-finger: restricts the proliferation of cytosolic bacteria, such as Salmonella, by generating the bacterial ubiquitin coat through the ubiquitination of LPS. Ubiquitination of LPS triggers cell-autonomous immunity, such as antibacterial autophagy, leading to degradation of the microbial invader. Involved in lipid metabolism by regulating fat storage and lipid droplet formation; act by inhibiting the lipolytic process. Also regulates lipotoxicity by inhibiting desaturation of fatty acids. Also acts as an E3 ubiquitin-protein ligase via its RING-type zinc finger. Involved in the non-canonical Wnt signaling pathway in vascular development: acts by mediating ubiquitination and degradation of proteins downstream of rspo3, leading to inhibit the non-canonical Wnt signaling pathway and promoting vessel regression. Also has ATPase activity; ATPase activity is required for ubiquitination of LPS. Also involved in neuromuscular regulation. This Danio rerio (Zebrafish) protein is E3 ubiquitin-protein ligase rnf213-alpha.